Reading from the N-terminus, the 880-residue chain is DNA mismatch repair protein MutS (880 aa).

631–638 (GPNMAGKS) is a binding site for ATP. The segment at 835-860 (RAAPPPPAPAAPKTSPVEERLREIQP) is disordered. The span at 850–860 (PVEERLREIQP) shows a compositional bias: basic and acidic residues.

Belongs to the DNA mismatch repair MutS family.

In terms of biological role, this protein is involved in the repair of mismatches in DNA. It is possible that it carries out the mismatch recognition step. This protein has a weak ATPase activity. This is DNA mismatch repair protein MutS from Cereibacter sphaeroides (strain ATCC 17029 / ATH 2.4.9) (Rhodobacter sphaeroides).